The primary structure comprises 360 residues: Cytokine receptor-like factor 2 (360 aa).

A signal peptide spans 1–18; the sequence is MRAVTWAIVAMLLPRVLG. Over 27 to 238 the chain is Extracellular; sequence TGGVGDTLSV…PRTPGTPTPP (212 aa). N-linked (GlcNAc...) asparagine glycosylation occurs at asparagine 62. Cysteine 77 and cysteine 90 are joined by a disulfide. The Fibronectin type-III domain maps to 123–214; the sequence is RPRPPWNVTL…PSKWTGVASL (92 aa). 2 N-linked (GlcNAc...) asparagine glycosylation sites follow: asparagine 129 and asparagine 174. An intrachain disulfide couples cysteine 185 to cysteine 223. A WSXWS motif motif is present at residues 205 to 209; the sequence is PSKWT. Residues 239–259 form a helical membrane-spanning segment; it reads LALACGLAVALLTLVLLLALL. At 260-360 the chain is on the cytoplasmic side; the sequence is RMRRVKEALL…LMGDSGYTTL (101 aa). The Box 1 motif motif lies at 268–276; it reads LLPGVPDPR.

Belongs to the type I cytokine receptor family. Type 5 subfamily. Heterodimer of CRLF2 and IL7R. Expressed in all tissues examined including brain, thymus, lung, heart, muscle, stomach, small intestine, liver, kidney, spleen, testis and skin. Highest levels in thymus, liver and testis.

The protein localises to the membrane. Functionally, receptor for thymic stromal lymphopoietin (TSLP). Forms a functional complex with TSLP and IL7R which is capable of stimulating cell proliferation through activation of STAT3 and STAT5. Also activates JAK2. Implicated in the development of the hematopoietic system. This Rattus norvegicus (Rat) protein is Cytokine receptor-like factor 2 (Crlf2).